The following is a 223-amino-acid chain: Probable Ras-related protein Rab-4A (223 aa).

16-23 (GNAGTGKT) contacts GTP. An Effector region motif is present at residues 38 to 46 (TQHTIGAEF). GTP contacts are provided by residues 64–68 (DTAGQ) and 122–125 (NKKD). Residues Cys-221 and Cys-223 are each lipidated (S-geranylgeranyl cysteine). Position 223 is a cysteine methyl ester (Cys-223).

It belongs to the small GTPase superfamily. Rab family.

Its subcellular location is the cell membrane. Protein transport. Probably involved in vesicular traffic. This is Probable Ras-related protein Rab-4A from Echinococcus multilocularis (Fox tapeworm).